A 726-amino-acid polypeptide reads, in one-letter code: PTS system glucose-specific EIICBA component (726 aa).

Positions 1 to 453 (MMKDTFKNVL…FNYATPGRNG (453 aa)) constitute a PTS EIIC type-1 domain. A run of 9 helical transmembrane segments spans residues 18–38 (FGKA…MISI), 62–82 (IGWG…GGSW), 90–110 (AFAA…IFGV), 139–159 (VLEA…GFVG), 184–204 (FVPF…AAFW), 311–331 (FKVG…VAIY), 344–364 (GMMI…PIEY), 365–385 (MFMF…GAAF), and 419–439 (IVNF…IANF). The PTS EIIB type-1 domain maps to 473 to 555 (GSQAVNIINL…QDILDSGEII (83 aa)). Cys-495 functions as the Phosphocysteine intermediate; for EIIB activity in the catalytic mechanism. A PTS EIIA type-1 domain is found at 596 to 700 (DPVFAQKMMG…ETSTVVVFTN (105 aa)). Catalysis depends on His-648, which acts as the Tele-phosphohistidine intermediate; for EIIA activity.

The protein resides in the cell membrane. It carries out the reaction N(pros)-phospho-L-histidyl-[protein] + D-glucose(out) = D-glucose 6-phosphate(in) + L-histidyl-[protein]. Functionally, the phosphoenolpyruvate-dependent sugar phosphotransferase system (sugar PTS), a major carbohydrate active transport system, catalyzes the phosphorylation of incoming sugar substrates concomitantly with their translocation across the cell membrane. This system is involved in glucose transport. This Streptococcus pneumoniae serotype 4 (strain ATCC BAA-334 / TIGR4) protein is PTS system glucose-specific EIICBA component (exp5).